A 296-amino-acid polypeptide reads, in one-letter code: Nucleotide-binding protein ABC3036 (296 aa).

13 to 20 (GMSGAGKS) is a binding site for ATP. 64–67 (DLRG) is a GTP binding site.

The protein belongs to the RapZ-like family.

Displays ATPase and GTPase activities. This is Nucleotide-binding protein ABC3036 from Shouchella clausii (strain KSM-K16) (Alkalihalobacillus clausii).